Here is a 358-residue protein sequence, read N- to C-terminus: MAEMTEDSKSDTARKQLVELVDLNLTSNAALNAEIDLFDRYISRLDLRTFETVWKWQNLSTEKIPGRKAKVRTPGRQQLLTLEQKCVVAKSVYKKMIEDLKIAKIHSEKQLDNYKATLEEADIHLAEIKKERSHFKRNIVEELEDKKSMTMSAEKVMRYIEDKIKAKDILIEKLHRKNSALLTHKKKQQAQLRQQEEMAEGVTVLDFELLKFENIRFRKQLDEQNLKQVNLKLLAVKTLQTLNSNKEKLHILTNESEMLSSDTALRTKLLVKIEEETEQAEEERHKAEALNRKLRDQLADFHVPHVLQYIKLKESHGQLQKSVREWERKVEIAEMALKTYTKSWDKLRFAAGAGLVPI.

3 coiled-coil regions span residues 93–138, 176–200, and 266–343; these read YKKM…FKRN, RKNS…EMAE, and RTKL…YTKS.

This sequence belongs to the CFAP263 family. In terms of assembly, forms a complex with CFAP184; the interaction is required for functional activity in cilia. Interacts with HAP1 and PCM1.

The protein resides in the cytoplasm. The protein localises to the cytoskeleton. It is found in the microtubule organizing center. It localises to the centrosome. Its subcellular location is the centriolar satellite. The protein resides in the cell projection. The protein localises to the cilium. Its function is as follows. Component of centriolar satellites contributing to primary cilium formation. In complex with CFAP263, acts as a regulator of ciliary beating that connects radial spoke 3 (RS3) to the inner dynein arm (IDA) and the nexin-dynein regulatory complex (N-DRC). The complex is positioned parallel to N-DRC and forms a connection between the arch at the base of RS3, the IDA tail and N-DRC. The protein is Cilia- and flagella-associated protein 263 (cfap263) of Danio rerio (Zebrafish).